Reading from the N-terminus, the 113-residue chain is Hydrogenase maturation factor HypA (113 aa).

Ni(2+) is bound at residue histidine 2. 4 residues coordinate Zn(2+): cysteine 73, cysteine 76, cysteine 89, and cysteine 92.

This sequence belongs to the HypA/HybF family.

Its function is as follows. Involved in the maturation of [NiFe] hydrogenases. Required for nickel insertion into the metal center of the hydrogenase. The protein is Hydrogenase maturation factor HypA of Alkalilimnicola ehrlichii (strain ATCC BAA-1101 / DSM 17681 / MLHE-1).